A 250-amino-acid chain; its full sequence is Small ribosomal subunit protein uS3 (250 aa).

The KH type-2 domain maps to 39–111 (IRPLIKNHYP…KVQINIFEVK (73 aa)).

It belongs to the universal ribosomal protein uS3 family. As to quaternary structure, part of the 30S ribosomal subunit. Forms a tight complex with proteins S10 and S14.

Its function is as follows. Binds the lower part of the 30S subunit head. Binds mRNA in the 70S ribosome, positioning it for translation. The protein is Small ribosomal subunit protein uS3 of Ziziphus jujuba witches'-broom phytoplasma.